The primary structure comprises 188 residues: uncharacterized protein (188 aa).

This is an uncharacterized protein from Autographa californica nuclear polyhedrosis virus (AcMNPV).